The primary structure comprises 422 residues: Methylaspartate ammonia-lyase (422 aa).

Glutamine 175 contacts (2S,3S)-3-methyl-L-aspartate. 3 residues coordinate Mg(2+): aspartate 239, glutamate 276, and aspartate 310. A (2S,3S)-3-methyl-L-aspartate-binding site is contributed by glutamine 332. Lysine 334 (proton acceptor) is an active-site residue. Residue 363 to 364 (TC) coordinates (2S,3S)-3-methyl-L-aspartate.

Belongs to the methylaspartate ammonia-lyase family. As to quaternary structure, homodimer. Requires Mg(2+) as cofactor.

The catalysed reaction is (2S,3S)-3-methyl-L-aspartate = mesaconate + NH4(+). It functions in the pathway amino-acid degradation; L-glutamate degradation via mesaconate pathway; acetate and pyruvate from L-glutamate: step 2/4. Involved in the methylaspartate cycle. Catalyzes the formation of the alpha,beta-unsaturated bond by the reversible anti elimination of ammonia from L-threo-beta-methylaspartate (L-threo-(2S,3S)-3-methylaspartate) to give mesaconate. In Haloarcula marismortui (strain ATCC 43049 / DSM 3752 / JCM 8966 / VKM B-1809) (Halobacterium marismortui), this protein is Methylaspartate ammonia-lyase (mal).